The primary structure comprises 212 residues: Orotate phosphoribosyltransferase (212 aa).

K26 contributes to the 5-phospho-alpha-D-ribose 1-diphosphate binding site. An orotate-binding site is contributed by 34–35 (FF). 5-phospho-alpha-D-ribose 1-diphosphate contacts are provided by residues 72-73 (YK), R98, K99, K102, H104, and 123-131 (DDVISAGTS). Orotate is bound by residues S127 and R155.

This sequence belongs to the purine/pyrimidine phosphoribosyltransferase family. PyrE subfamily. In terms of assembly, homodimer. Requires Mg(2+) as cofactor.

The enzyme catalyses orotidine 5'-phosphate + diphosphate = orotate + 5-phospho-alpha-D-ribose 1-diphosphate. It participates in pyrimidine metabolism; UMP biosynthesis via de novo pathway; UMP from orotate: step 1/2. Catalyzes the transfer of a ribosyl phosphate group from 5-phosphoribose 1-diphosphate to orotate, leading to the formation of orotidine monophosphate (OMP). The protein is Orotate phosphoribosyltransferase of Thiobacillus denitrificans (strain ATCC 25259 / T1).